The following is a 189-amino-acid chain: Peptidyl-tRNA hydrolase (189 aa).

A tRNA-binding site is contributed by Tyr15. His20 serves as the catalytic Proton acceptor. TRNA contacts are provided by Phe66, Asn68, and Asn114.

Belongs to the PTH family. As to quaternary structure, monomer.

The protein resides in the cytoplasm. The enzyme catalyses an N-acyl-L-alpha-aminoacyl-tRNA + H2O = an N-acyl-L-amino acid + a tRNA + H(+). Hydrolyzes ribosome-free peptidyl-tRNAs (with 1 or more amino acids incorporated), which drop off the ribosome during protein synthesis, or as a result of ribosome stalling. Functionally, catalyzes the release of premature peptidyl moieties from peptidyl-tRNA molecules trapped in stalled 50S ribosomal subunits, and thus maintains levels of free tRNAs and 50S ribosomes. The sequence is that of Peptidyl-tRNA hydrolase from Streptococcus pneumoniae serotype 2 (strain D39 / NCTC 7466).